The chain runs to 165 residues: Large ribosomal subunit protein uL15 (165 aa).

The disordered stretch occupies residues methionine 1–asparagine 44. Positions arginine 21–glycine 37 are enriched in gly residues.

Belongs to the universal ribosomal protein uL15 family. In terms of assembly, part of the 50S ribosomal subunit.

In terms of biological role, binds to the 23S rRNA. The sequence is that of Large ribosomal subunit protein uL15 from Anaeromyxobacter dehalogenans (strain 2CP-1 / ATCC BAA-258).